Reading from the N-terminus, the 166-residue chain is uncharacterized protein (166 aa).

3 4Fe-4S ferredoxin-type domains span residues 44–73 (ARED…LKQQ), 75–104 (ATLE…PNFP), and 139–166 (STLE…ITLK). Residues Cys53, Cys56, Cys59, Cys63, Cys84, Cys87, Cys90, and Cys94 each coordinate [4Fe-4S] cluster.

This is an uncharacterized protein from Haemophilus influenzae (strain ATCC 51907 / DSM 11121 / KW20 / Rd).